Consider the following 237-residue polypeptide: Sensory rhodopsin-2 (237 aa).

Over 1–2 (MA) the chain is Extracellular. A helical transmembrane segment spans residues 3–23 (LTTWFWVGAVGMLAGTVLPIR). The Cytoplasmic segment spans residues 24–31 (DCIRHPSH). The chain crosses the membrane as a helical span at residues 32-53 (RRYDLVLAGITGLAAIAYTTMG). Residues 54 to 67 (LGITATTVGDRTVY) lie on the Extracellular side of the membrane. Residues 68-89 (LARYIDWLVTTPLIVLYLAMLA) traverse the membrane as a helical segment. Over 90–92 (RPG) the chain is Cytoplasmic. A helical membrane pass occupies residues 93–115 (HRTSAWLLAADVFVIAAGIAAAL). At 116–119 (TTGV) the chain is on the extracellular side. The helical transmembrane segment at 120-147 (QRWLFFAVGAAGYAALLYGLLGTLPRAL) threads the bilayer. Over 148–150 (GDD) the chain is Cytoplasmic. Residues 151–178 (PRVRSLFVTLRNITVVLWTLYPVVWLLS) form a helical membrane-spanning segment. Residues 179–186 (PAGIGILQ) lie on the Extracellular side of the membrane. The chain crosses the membrane as a helical span at residues 187-214 (TEMYTIVVVYLDFISKVAFVAFAVLGAD). N6-(retinylidene)lysine is present on K202. Residues 215–237 (AVSRLVAADAAAPATAEPTPDGD) are Cytoplasmic-facing.

Belongs to the archaeal/bacterial/fungal opsin family. Interacts with HTR-II.

It localises to the cell membrane. Functionally, photophobic photoreceptor responsible for the negative phototaxis. Activates the sensory rhodopsin II transducer (HTR-II) in response to blue light. The polypeptide is Sensory rhodopsin-2 (sop2) (Halobacterium salinarum (strain ATCC 700922 / JCM 11081 / NRC-1) (Halobacterium halobium)).